A 421-amino-acid polypeptide reads, in one-letter code: Synaptotagmin-12 (421 aa).

Residues 1–18 (MAVDVTEYHLSVIKSPPG) lie on the Vesicular side of the membrane. The helical transmembrane segment at 19–39 (WEVGVYAAGALALLGIAAVSL) threads the bilayer. Topologically, residues 40 to 421 (WKLWTSGSFP…VSMWHPVRRN (382 aa)) are cytoplasmic. Residue Ser-97 is modified to Phosphoserine; by PKA. Phosphoserine is present on residues Ser-99 and Ser-214. 2 C2 domains span residues 152–272 (TLGQ…SGWL) and 283–416 (AVGE…SMWH).

Belongs to the synaptotagmin family. In terms of assembly, homodimer. Can also form heterodimers. Interacts with SYT1. Post-translationally, phosphorylation of Ser-97 is required for mossy-fiber long-term potentiation. As to expression, expressed in the brain, specifically in neurons of the cerebellum, cortex, hippocampus, olfactory bulb, brainstem and spinal cord (at protein level).

It is found in the cytoplasmic vesicle. The protein resides in the secretory vesicle. It localises to the synaptic vesicle membrane. In terms of biological role, synaptic vesicle phosphoprotein that enhances spontaneous neurotransmitter release but does not effect induced neurotransmitter release. Unlike other synaptotagmins, it does not bind Ca(2+) or phospholipids. Essential for mossy-fiber long-term potentiation in the hippocampus. The protein is Synaptotagmin-12 of Rattus norvegicus (Rat).